A 301-amino-acid chain; its full sequence is MEQLVNELIQANVGRVLVDEPLARYTTMKIGGPADILIVPKRVAGIEKTLQLVKKYKTKWTVIGRGSNLLVSDLGIEGVVIRLGEGLDHLEVEKHRVRVGGGYPLIKLSTLLSRQGLAGLEFASGIPGSVGGAVYMNAGAHKSDISNILSKALILFEDGTIDWLTHGEMEFSYRTSVLQTKRPGIVLEAEFQLQIGERERIVSVMQKNKDYRRETQPWNHPCAGSVFRNPTPYFAGDLIEKAGLRGYQIGGAQISEMHGNFIINTGGASAQDVLSLIALIKQTIKDKFGVEMHTEVEIIGR.

The FAD-binding PCMH-type domain maps to 29 to 196; that stretch reads KIGGPADILI…LEAEFQLQIG (168 aa). Residue Arg-174 is part of the active site. The active-site Proton donor is the Ser-225. Glu-295 is a catalytic residue.

It belongs to the MurB family. The cofactor is FAD.

The protein resides in the cytoplasm. It catalyses the reaction UDP-N-acetyl-alpha-D-muramate + NADP(+) = UDP-N-acetyl-3-O-(1-carboxyvinyl)-alpha-D-glucosamine + NADPH + H(+). Its pathway is cell wall biogenesis; peptidoglycan biosynthesis. Its function is as follows. Cell wall formation. The polypeptide is UDP-N-acetylenolpyruvoylglucosamine reductase 1 (murB1) (Bacillus anthracis).